We begin with the raw amino-acid sequence, 186 residues long: UPF0340 protein M6_Spy1622 (186 aa).

This sequence belongs to the UPF0340 family.

This is UPF0340 protein M6_Spy1622 from Streptococcus pyogenes serotype M6 (strain ATCC BAA-946 / MGAS10394).